Reading from the N-terminus, the 242-residue chain is MIKIGIYGAKGRMGKQIEECLKSETQARISILYDKGGNLGELFEKSDVIIDFSSPSGTHELLNYARTMPKPLVIGTTGLDEKILHLMQSASEVMPIFYATNMSLGVAVLNYLASKASQMLRNFDIEILEMHHRHKKDAPSGTAMTLAQSVAKARNLELEKVRVSGRDGIIGERSKDEIAVMSLRGGDIVGRHTVGFYEDGEFLELNHTATSRATFAKGAIKIAIWLSKQEAKMYSINDFLGI.

Residues 8-13, 75-77, and 99-102 each bind NAD(+); these read GAKGRM, GTT, and ATNM. His131 (proton donor/acceptor) is an active-site residue. His132 serves as a coordination point for (S)-2,3,4,5-tetrahydrodipicolinate. Catalysis depends on Lys135, which acts as the Proton donor. Position 141–142 (141–142) interacts with (S)-2,3,4,5-tetrahydrodipicolinate; that stretch reads GT.

Belongs to the DapB family.

It localises to the cytoplasm. The enzyme catalyses (S)-2,3,4,5-tetrahydrodipicolinate + NAD(+) + H2O = (2S,4S)-4-hydroxy-2,3,4,5-tetrahydrodipicolinate + NADH + H(+). It catalyses the reaction (S)-2,3,4,5-tetrahydrodipicolinate + NADP(+) + H2O = (2S,4S)-4-hydroxy-2,3,4,5-tetrahydrodipicolinate + NADPH + H(+). It participates in amino-acid biosynthesis; L-lysine biosynthesis via DAP pathway; (S)-tetrahydrodipicolinate from L-aspartate: step 4/4. Catalyzes the conversion of 4-hydroxy-tetrahydrodipicolinate (HTPA) to tetrahydrodipicolinate. The polypeptide is 4-hydroxy-tetrahydrodipicolinate reductase (Campylobacter jejuni subsp. jejuni serotype O:2 (strain ATCC 700819 / NCTC 11168)).